A 173-amino-acid polypeptide reads, in one-letter code: CKLF-like MARVEL transmembrane domain-containing protein 8 (173 aa).

The 133-residue stretch at 36-168 (FLRTLPGFLI…NTYFSFIAWR (133 aa)) folds into the MARVEL domain. 4 helical membrane passes run 40 to 60 (LPGFLIVAEIVLGLLVWTLIA), 70 to 90 (FGWVMFVAVFYWVLTVFFLII), 105 to 125 (TTVGLCFNGSAFVLYLSAAVV), and 147 to 167 (FFAFLVTICYAGNTYFSFIAW).

Belongs to the chemokine-like factor family. Highly expressed in liver and pancreas.

Its subcellular location is the membrane. The protein resides in the cytoplasm. The protein localises to the nucleus. The polypeptide is CKLF-like MARVEL transmembrane domain-containing protein 8 (CMTM8) (Homo sapiens (Human)).